The chain runs to 239 residues: Protein GrpE (239 aa).

2 disordered regions span residues 1 to 56 and 208 to 239; these read MIEN…KNTI and SMGPGKQNSQQEVEKDTVEEDVNSEVNTSEDV. Residues 40–53 show a composition bias toward basic and acidic residues; the sequence is TSQKKEAINTEELK. Residues 224 to 239 show a composition bias toward acidic residues; the sequence is TVEEDVNSEVNTSEDV.

This sequence belongs to the GrpE family. In terms of assembly, homodimer.

The protein resides in the cytoplasm. Its function is as follows. Participates actively in the response to hyperosmotic and heat shock by preventing the aggregation of stress-denatured proteins, in association with DnaK and GrpE. It is the nucleotide exchange factor for DnaK and may function as a thermosensor. Unfolded proteins bind initially to DnaJ; upon interaction with the DnaJ-bound protein, DnaK hydrolyzes its bound ATP, resulting in the formation of a stable complex. GrpE releases ADP from DnaK; ATP binding to DnaK triggers the release of the substrate protein, thus completing the reaction cycle. Several rounds of ATP-dependent interactions between DnaJ, DnaK and GrpE are required for fully efficient folding. This is Protein GrpE from Prochlorococcus marinus (strain MIT 9215).